The chain runs to 384 residues: Acetylornithine aminotransferase (384 aa).

Pyridoxal 5'-phosphate-binding positions include 94–95 (GT) and F121. R124 serves as a coordination point for N(2)-acetyl-L-ornithine. A pyridoxal 5'-phosphate-binding site is contributed by 206–209 (DEVQ). An N6-(pyridoxal phosphate)lysine modification is found at K235. S263 provides a ligand contact to N(2)-acetyl-L-ornithine. Residue T264 participates in pyridoxal 5'-phosphate binding.

This sequence belongs to the class-III pyridoxal-phosphate-dependent aminotransferase family. ArgD subfamily. In terms of assembly, homodimer. Requires pyridoxal 5'-phosphate as cofactor.

It is found in the cytoplasm. The enzyme catalyses N(2)-acetyl-L-ornithine + 2-oxoglutarate = N-acetyl-L-glutamate 5-semialdehyde + L-glutamate. Its pathway is amino-acid biosynthesis; L-arginine biosynthesis; N(2)-acetyl-L-ornithine from L-glutamate: step 4/4. This is Acetylornithine aminotransferase from Listeria innocua serovar 6a (strain ATCC BAA-680 / CLIP 11262).